Consider the following 144-residue polypeptide: 3-hydroxyacyl-[acyl-carrier-protein] dehydratase FabZ (144 aa).

The active site involves histidine 49.

The protein belongs to the thioester dehydratase family. FabZ subfamily.

The protein localises to the cytoplasm. It carries out the reaction a (3R)-hydroxyacyl-[ACP] = a (2E)-enoyl-[ACP] + H2O. Functionally, involved in unsaturated fatty acids biosynthesis. Catalyzes the dehydration of short chain beta-hydroxyacyl-ACPs and long chain saturated and unsaturated beta-hydroxyacyl-ACPs. This Alkaliphilus oremlandii (strain OhILAs) (Clostridium oremlandii (strain OhILAs)) protein is 3-hydroxyacyl-[acyl-carrier-protein] dehydratase FabZ.